The following is a 132-amino-acid chain: Small ribosomal subunit protein uS13 (132 aa).

Residues 101-125 are compositionally biased toward basic residues; it reads RGLPVRGQRTKTNARTRKGPRKTVA. Positions 101 to 132 are disordered; sequence RGLPVRGQRTKTNARTRKGPRKTVANKKIETR.

This sequence belongs to the universal ribosomal protein uS13 family. As to quaternary structure, part of the 30S ribosomal subunit. Forms a loose heterodimer with protein S19. Forms two bridges to the 50S subunit in the 70S ribosome.

Located at the top of the head of the 30S subunit, it contacts several helices of the 16S rRNA. In the 70S ribosome it contacts the 23S rRNA (bridge B1a) and protein L5 of the 50S subunit (bridge B1b), connecting the 2 subunits; these bridges are implicated in subunit movement. Contacts the tRNAs in the A and P-sites. In Ureaplasma parvum serovar 3 (strain ATCC 27815 / 27 / NCTC 11736), this protein is Small ribosomal subunit protein uS13.